The primary structure comprises 42 residues: Perlinhibin-related protein (42 aa).

In terms of processing, contains four disulfide bonds.

Functionally, inhibitor of shell growth. In Haliotis laevigata (Smooth Australian abalone), this protein is Perlinhibin-related protein.